The primary structure comprises 161 residues: Nucleotide-binding protein Gmet_3206 (161 aa).

It belongs to the YajQ family.

Nucleotide-binding protein. In Geobacter metallireducens (strain ATCC 53774 / DSM 7210 / GS-15), this protein is Nucleotide-binding protein Gmet_3206.